The sequence spans 299 residues: N-acetylaspartate synthetase (299 aa).

Over residues 44–57 (AAPGPAAAPPPAAG) the composition is skewed to pro residues. Positions 44–70 (AAPGPAAAPPPAAGPQPHGGTGGAGPP) are disordered. Gly residues predominate over residues 60 to 70 (PHGGTGGAGPP). A helical membrane pass occupies residues 118–138 (YALLAALCFAVTRSLLLTCLV). The 138-residue stretch at 143–280 (LALRYYYSRK…VLPGMTLSLA (138 aa)) folds into the N-acetyltransferase domain.

The protein belongs to the NAT8 family. As to expression, expressed in brain, including in mesencephalic dopaminergic neurons of the substantia nigra and ventral tegmental area and oligodendrocytes. Expressed in cortical pyramidal neurons and granule cells of the hippocampus (at protein level).

The protein resides in the cytoplasm. It is found in the microsome membrane. It localises to the mitochondrion membrane. Its subcellular location is the endoplasmic reticulum membrane. The enzyme catalyses L-aspartate + acetyl-CoA = N-acetyl-L-aspartate + CoA + H(+). With respect to regulation, aminooxyacetic acid (AOAA) blocks its activity in both cytoplasm and mitochondria. In terms of biological role, catalyzes the synthesis of N-acetylaspartate acid (NAA) from L-aspartate and acetyl-CoA. Promotes dopamine uptake by regulating TNF-alpha expression. Attenuates methamphetamine-induced inhibition of dopamine uptake. The chain is N-acetylaspartate synthetase (Nat8l) from Rattus norvegicus (Rat).